The sequence spans 220 residues: Chaperone protein TorD (220 aa).

Belongs to the TorD/DmsD family. TorD subfamily.

The protein resides in the cytoplasm. In terms of biological role, involved in the biogenesis of TorA. Acts on TorA before the insertion of the molybdenum cofactor and, as a result, probably favors a conformation of the apoenzyme that is competent for acquiring the cofactor. The chain is Chaperone protein TorD from Vibrio cholerae serotype O1 (strain M66-2).